We begin with the raw amino-acid sequence, 664 residues long: Frizzled-3 (664 aa).

Residues 1 to 16 (MAAYLISFIWVSVILA) form the signal peptide. The Extracellular segment spans residues 17–204 (QKSMGHSLFA…REELSFARYF (188 aa)). Residues 22-135 (HSLFACEPIT…CSRFPDCDEP (114 aa)) enclose the FZ domain. 5 disulfide bridges follow: Cys-27-Cys-88, Cys-35-Cys-81, Cys-72-Cys-109, Cys-98-Cys-132, and Cys-102-Cys-126. Residue Asn-41 is glycosylated (N-linked (GlcNAc...) asparagine). The helical transmembrane segment at 205–225 (IGVISIVCLSATLFTFLTFLI) threads the bilayer. At 226-236 (DVTRFRYPERP) the chain is on the cytoplasmic side. Residues 237-257 (IIFYAVCYMMVSLIFFIGFLL) traverse the membrane as a helical segment. The Extracellular segment spans residues 258–287 (EDKVACNGANPSQYKASTVTQGSHNKACTM). A helical transmembrane segment spans residues 288 to 308 (LFMVLYFFTMAGSVWWVILTI). The Cytoplasmic portion of the chain corresponds to 309–327 (TWFLAAVPKWGSEAIEKKA). Residues 328–348 (LLFHASAWGIPGTLTIILLAM) traverse the membrane as a helical segment. Residues 349 to 373 (NKIEGDNISGVCFVGLYDVHALRYF) lie on the Extracellular side of the membrane. Asn-355 carries N-linked (GlcNAc...) asparagine glycosylation. A helical transmembrane segment spans residues 374–394 (VLAPLCLDVVVGVSLLLAGII). Topologically, residues 395–419 (SLNRVRIEIPLEKENQDKLVKFMIR) are cytoplasmic. A helical membrane pass occupies residues 420–440 (IGVFSILYLVPLLVVIGCYFY). Over 441-476 (EQAYRGVWETTWVQERCREYHIPCPYKVTQTSRPDL) the chain is Extracellular. Residues 477-497 (ILFLMKYLMLLVVGIPSVFWV) form a helical membrane-spanning segment. Residues 498–664 (GSKKTCFEWA…RVIEADATSA (167 aa)) are Cytoplasmic-facing. The short motif at 501 to 506 (KTCFEW) is the Lys-Thr-X-X-X-Trp motif, mediates interaction with the PDZ domain of Dvl family members element. The segment at 537–664 (RDPNTPIVRK…RVIEADATSA (128 aa)) is disordered. Composition is skewed to polar residues over residues 549–564 (GTSTQGTSTHASSTQL) and 573–585 (KAGSVQSKVSSYH).

Belongs to the G-protein coupled receptor Fz/Smo family. As to expression, expression restricted to the early nervous system.

It localises to the membrane. It is found in the cell membrane. The protein resides in the cell surface. Its subcellular location is the apical cell membrane. Receptor for Wnt proteins. Most of frizzled receptors are coupled to the beta-catenin canonical signaling pathway, which leads to the activation of disheveled proteins, inhibition of GSK-3 kinase, nuclear accumulation of beta-catenin and activation of Wnt target genes. A second signaling pathway involving PKC and calcium fluxes has been seen for some family members, but it is not yet clear if it represents a distinct pathway or if it can be integrated in the canonical pathway, as PKC seems to be required for Wnt-mediated inactivation of GSK-3 kinase. Both pathways seem to involve interactions with G-proteins. Activated by Wnt8. Involved in transduction and intercellular transmission of polarity information during tissue morphogenesis and/or in differentiated tissues. Plays a role in controlling early axon growth and guidance processes necessary for the formation of a subset of central and peripheral major fiber tracts. Involved in the migration of cranial neural crest cells. May also be implicated in the transmission of sensory information from the trunk and limbs to the brain. Controls commissural sensory axons guidance after midline crossing along the anterior-posterior axis in the developing spinal cord in a Wnt-dependent signaling pathway. Together with FZD6, is involved in the neural tube closure and plays a role in the regulation of the establishment of planar cell polarity (PCP). Promotes neurogenesis by maintaining sympathetic neuroblasts within the cell cycle in a beta-catenin-dependent manner. This is Frizzled-3 (fzd3) from Xenopus laevis (African clawed frog).